A 315-amino-acid polypeptide reads, in one-letter code: Probable cell division protein WhiA (315 aa).

Residues 278–312 (SLSDLAGMIEGQELTKSGINHRMRKLMQIVKELNH) constitute a DNA-binding region (H-T-H motif).

This sequence belongs to the WhiA family.

Involved in cell division and chromosome segregation. The polypeptide is Probable cell division protein WhiA (Oenococcus oeni (strain ATCC BAA-331 / PSU-1)).